A 118-amino-acid polypeptide reads, in one-letter code: Hydrogenase maturation factor HypA (118 aa).

His2 serves as a coordination point for Ni(2+). Zn(2+) contacts are provided by Cys73, Cys76, Cys89, and Cys92.

The protein belongs to the HypA/HybF family.

In terms of biological role, involved in the maturation of [NiFe] hydrogenases. Required for nickel insertion into the metal center of the hydrogenase. This chain is Hydrogenase maturation factor HypA, found in Shewanella sp. (strain MR-7).